The chain runs to 466 residues: Replicative helicase loading/DNA remodeling protein DnaB (466 aa).

A DDBH1 region spans residues 3-113 (RQAFEFGLRP…ETQFVYQLIQ (111 aa)). The interval 200–292 (EMLRQMLGKH…TSSSAGKSSE (93 aa)) is DDBH2-1. The tract at residues 293–401 (VNPKPQSDEW…QPKNEGSSGN (109 aa)) is DDBH2-2.

Belongs to the DnaB/DnaD family. Homotetramer, higher-order oligomers are induced by ssDNA. The DNA replisome assembles sequentially on oriC in this order; DnaA, DnaD, DnaB, DnaI-DnaC helicase. Part of the replication restart primosome, PriA binds first, then DnaD and subsequently DnaB bind.

Its function is as follows. Helps DnaI load the DnaC replicative helicase onto single-stranded (ss)DNA. During DNA replication from the origin of replication (oriC) in the DNA replisome, DnaB and DnaD are required after DnaA and before subsequent helicase DnaC loading. Component of the replication restart primosome, which reloads the replicative helicase on sites other than oriC. Essential for replication initiation of the chromosome and plasmids. Remodels DNA, laterally compacts supercoiled plasmid and linear DNA. Binds supercoiled, nicked and linear double-stranded (ds)DNA and phage phiX174 single-stranded (ss)DNA; phiX174 ssDNA is a better substrate than for B.subtilis. No binding to phage M13 ssDNA although it induces oligomers. This Staphylococcus aureus (strain NCTC 8325 / PS 47) protein is Replicative helicase loading/DNA remodeling protein DnaB.